Consider the following 492-residue polypeptide: Protein nucleotidyltransferase YdiU (492 aa).

8 residues coordinate ATP: Gly88, Gly90, Arg91, Lys111, Asp123, Gly124, Arg174, and Arg181. Residue Asp250 is the Proton acceptor of the active site. The Mg(2+) site is built by Asn251 and Asp260. Asp260 lines the ATP pocket.

Belongs to the SELO family. It depends on Mg(2+) as a cofactor. Mn(2+) is required as a cofactor.

It catalyses the reaction L-seryl-[protein] + ATP = 3-O-(5'-adenylyl)-L-seryl-[protein] + diphosphate. The catalysed reaction is L-threonyl-[protein] + ATP = 3-O-(5'-adenylyl)-L-threonyl-[protein] + diphosphate. The enzyme catalyses L-tyrosyl-[protein] + ATP = O-(5'-adenylyl)-L-tyrosyl-[protein] + diphosphate. It carries out the reaction L-histidyl-[protein] + UTP = N(tele)-(5'-uridylyl)-L-histidyl-[protein] + diphosphate. It catalyses the reaction L-seryl-[protein] + UTP = O-(5'-uridylyl)-L-seryl-[protein] + diphosphate. The catalysed reaction is L-tyrosyl-[protein] + UTP = O-(5'-uridylyl)-L-tyrosyl-[protein] + diphosphate. Its function is as follows. Nucleotidyltransferase involved in the post-translational modification of proteins. It can catalyze the addition of adenosine monophosphate (AMP) or uridine monophosphate (UMP) to a protein, resulting in modifications known as AMPylation and UMPylation. The protein is Protein nucleotidyltransferase YdiU of Rhodopseudomonas palustris (strain BisB5).